We begin with the raw amino-acid sequence, 388 residues long: MSASRPNRVVLVLNSGSSSLKFQLVEPDSGMSRATGNIERIGEESSSVPDHDAALRRVFEILAEDDIDLQSCGLVAVGHRVVHGGKDFYEPTLLNDAVIGKLDELSPLAPLHNPPAVLCIRVARALLPDVPHIAVFDTAFFHQLPPAAATYAIDRELADVWKIRRYGFHGTSHEYVSQQAAEFLGKPIGDLNQIVLHLGNGASASAVAGGRPVETSMGLTPLEGLVMGTRSGDLDPGVIGYLWRTAKLGVDEIESMLNHRSGMLGLAGERDFRRLRAMIDDGDPAAELAYDVFIHRLRKYVGAYLAVLGHTDVVSFTAGIGEHDAAVRRDTLAGMAELGISLDERRNACPSGGARRISADDSPVTVLVIPTNEELAIARHCCSVLVAV.

Asparagine 14 contributes to the Mg(2+) binding site. ATP is bound at residue lysine 21. Arginine 80 contacts substrate. Aspartate 137 serves as the catalytic Proton donor/acceptor. ATP-binding positions include 197-201 (HLGNG), 271-273 (DFR), and 319-323 (GIGEH). Glutamate 373 provides a ligand contact to Mg(2+).

This sequence belongs to the acetokinase family. As to quaternary structure, homodimer. Mg(2+) is required as a cofactor. The cofactor is Mn(2+).

It is found in the cytoplasm. It carries out the reaction acetate + ATP = acetyl phosphate + ADP. It functions in the pathway metabolic intermediate biosynthesis; acetyl-CoA biosynthesis; acetyl-CoA from acetate: step 1/2. Functionally, catalyzes the formation of acetyl phosphate from acetate and ATP. Can also catalyze the reverse reaction. The polypeptide is Acetate kinase (Mycobacterium marinum (strain ATCC BAA-535 / M)).